A 225-amino-acid chain; its full sequence is Chromosome partition protein MukE (225 aa).

Positions 197-225 are disordered; it reads RDGEAMPIENHLQLNDETEESQPDSGEEE. Residues 212-225 show a composition bias toward acidic residues; sequence DETEESQPDSGEEE.

The protein belongs to the MukE family. As to quaternary structure, interacts, and probably forms a ternary complex, with MukF and MukB. The complex formation is stimulated by calcium or magnesium.

The protein localises to the cytoplasm. It localises to the nucleoid. Functionally, involved in chromosome condensation, segregation and cell cycle progression. May participate in facilitating chromosome segregation by condensation DNA from both sides of a centrally located replisome during cell division. Probably acts via its interaction with MukB and MukF. This Salmonella typhi protein is Chromosome partition protein MukE.